The primary structure comprises 300 residues: Inositol polyphosphate multikinase beta (300 aa).

Serine 78 carries the phosphoserine modification.

This sequence belongs to the inositol phosphokinase (IPK) family. Interacts with KIN10 and KIN11. Phosphorylated by KIN10. Expressed in leaves, stems, roots, siliques and flowers. Detected in vascular strands, stigma cells, the abscission zones of fully elongated siliques, the root central cylinder and the root tip.

The protein resides in the nucleus. It carries out the reaction 1D-myo-inositol 1,4,5-trisphosphate + 2 ATP = 1D-myo-inositol 1,3,4,5,6-pentakisphosphate + 2 ADP + 2 H(+). The enzyme catalyses 1D-myo-inositol 1,3,4,6-tetrakisphosphate + ATP = 1D-myo-inositol 1,3,4,5,6-pentakisphosphate + ADP + H(+). With respect to regulation, down-regulated by KIN10 through its protein phosphorylation. Its function is as follows. Inositol phosphate kinase with a broad substrate specificity. Phosphorylates inositol 1,4,5-trisphosphate (Ins(1,4,5)P3), inositol 1,4,5,6-tetrakisphosphate (Ins(1,4,5,6)P4), inositol 1,3,4,5-tetrakisphosphate (Ins(1,3,4,5)P4), inositol 1,3,4,6-tetrakisphosphate (Ins(1,3,4,6)P4) and inositol 1,2,3,4,6-pentakisphosphate (Ins(1,2,3,4,6)P5) but not inositol 1,4-bisphosphate (Ins(1,4)P2), inositol 1,3,4-trisphosphate (Ins(1,3,4)P3), inositol 1,2,6-trisphosphate (Ins(1,2,6)P3), inositol 3,4,5,6-tetrakisphosphate (Ins(3,4,5,6)P4), inositol 1,3,4,5,6-pentakisphosphate (Ins(1,3,4,5,6)P5), inositol 1,2,4,5,6-pentakisphosphate (Ins(1,2,4,5,6)P5) or inositol hexakisphosphate (InsP6). Involved in the auxin signaling pathway. Regulates axillary shoot branching and is required for phytate synthesis in seeds. This is Inositol polyphosphate multikinase beta (IPK2b) from Arabidopsis thaliana (Mouse-ear cress).